The chain runs to 246 residues: tRNA (guanine-N(1)-)-methyltransferase (246 aa).

Residues Gly-114 and 134 to 139 (IGDYIL) contribute to the S-adenosyl-L-methionine site.

Belongs to the RNA methyltransferase TrmD family. As to quaternary structure, homodimer.

The protein resides in the cytoplasm. The enzyme catalyses guanosine(37) in tRNA + S-adenosyl-L-methionine = N(1)-methylguanosine(37) in tRNA + S-adenosyl-L-homocysteine + H(+). Specifically methylates guanosine-37 in various tRNAs. The protein is tRNA (guanine-N(1)-)-methyltransferase of Coxiella burnetii (strain RSA 331 / Henzerling II).